A 329-amino-acid polypeptide reads, in one-letter code: Chloroplast envelope quinone oxidoreductase homolog (329 aa).

A substrate-binding site is contributed by arginine 58.

Belongs to the zinc-containing alcohol dehydrogenase family. Quinone oxidoreductase subfamily. As to quaternary structure, homodimer or homotetramer. Transition to monomer upon NADPH binding. Interacts with calmodulin. Interacts with HP30-1, HP30-2 and HP20.

It is found in the plastid. It localises to the chloroplast inner membrane. NADPH-dependent alpha,beta-unsaturated oxoene reductase reducing the double bond of medium-chain (C9) to long-chain (C18) reactive electrophile species deriving from poly-unsaturated fatty acid peroxides. The best substrates are 13-lipoxygenase-derived gamma-ketols, but is unable to reduce the double bond of short-chain alkenals and alkenones such as acrolein, crotonaldehyde, 3-buten-2-one, 4-hexen-3-one and trans-2-hexenal, or quinones such as duroquinone, decylubiquinone, coenzyme Q0, menadione, menaquinone and phylloquinone. Can use trans-2-nonenal, trans-3-decen-2-one, 4-hydroxynonenal, 12-oxo-10(E) dodecanoate (traumatin), 4-oxononenal, trans-1,3 diphenyl-2-propenone, trans-1,4-diphenyl-2-butene-1,4-dione, 9-oxo-12,13-epoxy-(10E)-octadecenoic acid (trans-EKODE-1b), 9-hydroxy-12-oxo-10(E)-octadecenoic acid, 9-Hydroxy-12-oxo-10(E),15(Z)-octadecadienoic acid and 9,13-dihydroxy-10-oxo-11-octadecenoic acid as substrates, but has no activity with 13(R,S)-hydroperoxy-9(Z),11(E)-octadecadienoic acid (13-HPOD), 9(S),12(S),13(S)-trihydroxy-10(E)-octadecenoic acid, 13-hydroxy-12-oxo-9(Z)-octadecenoic acid, 9-oxo-10(E),12(Z)-octadecadienoic acid (9-KODE), 13-oxo-9(Z),11(E)-octadecadienoic acid (13-KODE) and 12-oxo-10,15(Z)-phytodienoic acid (12-OPDA). The polypeptide is Chloroplast envelope quinone oxidoreductase homolog (Arabidopsis thaliana (Mouse-ear cress)).